A 180-amino-acid polypeptide reads, in one-letter code: Nudix hydrolase 16, mitochondrial (180 aa).

The 145-residue stretch at Gly18 to Phe162 folds into the Nudix hydrolase domain. Residue Phe60 coordinates substrate. Mn(2+)-binding residues include Gly63, Glu78, Glu82, and Glu144. Positions Gly63–Gly84 match the Nudix box motif.

This sequence belongs to the Nudix hydrolase family. The cofactor is Mg(2+). Mn(2+) serves as cofactor. Expressed in roots, leaves, stems and inflorescences.

The protein resides in the mitochondrion. Probably mediates the hydrolysis of some nucleoside diphosphate derivatives. The sequence is that of Nudix hydrolase 16, mitochondrial (NUDT16) from Arabidopsis thaliana (Mouse-ear cress).